The primary structure comprises 411 residues: Flavohemoprotein (411 aa).

Residues 5 to 142 form the Globin domain; the sequence is TLSQETKQIV…IADVFIQVEK (138 aa). Residue histidine 89 coordinates heme b. Catalysis depends on charge relay system residues tyrosine 99 and glutamate 141. The reductase stretch occupies residues 153 to 411; the sequence is GGWREFRSFV…FGPAGTLASS (259 aa). Positions 156–267 constitute an FAD-binding FR-type domain; the sequence is REFRSFVVEK…TAPAGDFTLQ (112 aa). Residues tyrosine 194 and 210–213 contribute to the FAD site; that span reads RQYS. NADP(+) is bound at residue 280 to 285; it reads GVGITP. FAD is bound at residue 401-404; it reads FFGP.

This sequence belongs to the globin family. Two-domain flavohemoproteins subfamily. The protein in the C-terminal section; belongs to the flavoprotein pyridine nucleotide cytochrome reductase family. The cofactor is heme b. Requires FAD as cofactor.

The enzyme catalyses 2 nitric oxide + NADPH + 2 O2 = 2 nitrate + NADP(+) + H(+). It carries out the reaction 2 nitric oxide + NADH + 2 O2 = 2 nitrate + NAD(+) + H(+). Functionally, is involved in NO detoxification in an aerobic process, termed nitric oxide dioxygenase (NOD) reaction that utilizes O(2) and NAD(P)H to convert NO to nitrate, which protects the bacterium from various noxious nitrogen compounds. Therefore, plays a central role in the inducible response to nitrosative stress. The protein is Flavohemoprotein of Halalkalibacterium halodurans (strain ATCC BAA-125 / DSM 18197 / FERM 7344 / JCM 9153 / C-125) (Bacillus halodurans).